The following is a 298-amino-acid chain: MAKERALTLEALRVMDAIDRRGSFAAAADELGRVPSALSYTMQKLEEELDVVLFDRSGHRTKFTNVGRMLLERGRVLLEAADKLTTDAEALARGWETHLTIVTEALVPTPAFFPLIDKLAAKANTQLAIITEVLAGAWERLEQGRADIVIAPDMHFRSSSEINSRKLYTLMNVYVAAPDHPIHQEPEPLSEVTRVKYRGIAVADTARERPVLTVQLLDKQPRLTVSTIEDKRQALLAGLGVATMPYPMVEKDIAEGRLRVVSPESTSEIDIIMAWRRDSMGEAKSWCLREIPKLFNGK.

Positions 7-64 (LTLEALRVMDAIDRRGSFAAAADELGRVPSALSYTMQKLEEELDVVLFDRSGHRTKFT) constitute an HTH lysR-type domain. The segment at residues 24–43 (FAAAADELGRVPSALSYTMQ) is a DNA-binding region (H-T-H motif).

This sequence belongs to the LysR transcriptional regulatory family.

Functionally, positive regulator partially required for expression of genes in the locus of effacement (LEE) large pathogenicity island (PAI). Also partially responsible for expression of neighboring gene dlsT (yhaO) during late exponential growth. Binds to DNA of promoter 1 in LEE and DNA from the dlsT promoter region. This is HTH-type transcriptional regulator YhaJ (yhaJ) from Escherichia coli O157:H7.